A 141-amino-acid polypeptide reads, in one-letter code: Protein KRTCAP2 homolog (141 aa).

The next 4 helical transmembrane spans lie at 11 to 31, 42 to 62, 74 to 94, and 97 to 117; these read VVSSIISGLLSIVLFGTLRFC, VLLGGYLFSWVFILSLTCVSN, AKLLPEIIFCLSLTVAAAGLV, and VCATTSVLFSLVGLYFLNRIS.

This sequence belongs to the KRTCAP2 family. Component of the oligosaccharyltransferase (OST) complex.

It localises to the membrane. Subunit of the oligosaccharyl transferase (OST) complex that catalyzes the initial transfer of a defined glycan (Glc(3)Man(9)GlcNAc(2) in eukaryotes) from the lipid carrier dolichol-pyrophosphate to an asparagine residue within an Asn-X-Ser/Thr consensus motif in nascent polypeptide chains, the first step in protein N-glycosylation. N-glycosylation occurs cotranslationally and the complex associates with the Sec61 complex at the channel-forming translocon complex that mediates protein translocation across the endoplasmic reticulum (ER). All subunits are required for a maximal enzyme activity. This is Protein KRTCAP2 homolog from Drosophila melanogaster (Fruit fly).